We begin with the raw amino-acid sequence, 102 residues long: Small ribosomal subunit protein uS10 (102 aa).

It belongs to the universal ribosomal protein uS10 family. Part of the 30S ribosomal subunit.

Its function is as follows. Involved in the binding of tRNA to the ribosomes. The protein is Small ribosomal subunit protein uS10 of Streptococcus pneumoniae (strain CGSP14).